The sequence spans 184 residues: Photosystem I assembly protein Ycf4 (184 aa).

The next 2 helical transmembrane spans lie at 22-42 and 57-77; these read FCWAFILFLGSLGFLLVGTSS and IIFFPQGIVMSFYGIAGLFIS.

Belongs to the Ycf4 family.

The protein localises to the plastid. The protein resides in the chloroplast thylakoid membrane. Seems to be required for the assembly of the photosystem I complex. The sequence is that of Photosystem I assembly protein Ycf4 from Lepidium virginicum (Virginia pepperweed).